The sequence spans 200 residues: Probable molybdenum cofactor guanylyltransferase (200 aa).

GTP is bound by residues 9 to 11 (LAG), Lys-21, Asp-69, and Asp-100. Asp-100 provides a ligand contact to Mg(2+).

This sequence belongs to the MobA family. Mg(2+) is required as a cofactor.

Its subcellular location is the cytoplasm. The catalysed reaction is Mo-molybdopterin + GTP + H(+) = Mo-molybdopterin guanine dinucleotide + diphosphate. Functionally, transfers a GMP moiety from GTP to Mo-molybdopterin (Mo-MPT) cofactor (Moco or molybdenum cofactor) to form Mo-molybdopterin guanine dinucleotide (Mo-MGD) cofactor. This Bacillus cereus (strain ZK / E33L) protein is Probable molybdenum cofactor guanylyltransferase.